We begin with the raw amino-acid sequence, 366 residues long: GTP-binding protein 10 (366 aa).

An Obg domain is found at glycine 13–isoleucine 148. Residues alanine 149–aspartate 344 form the OBG-type G domain. GTP is bound by residues glycine 155–serine 162, aspartate 202–leucine 206, and asparagine 278–aspartate 281. Residues glutamine 346–arginine 355 are compositionally biased toward basic and acidic residues. The segment at glutamine 346–serine 366 is disordered.

This sequence belongs to the TRAFAC class OBG-HflX-like GTPase superfamily. OBG GTPase family.

It localises to the nucleus. The protein localises to the nucleolus. May be involved in the ribosome maturation process. The chain is GTP-binding protein 10 (Gtpbp10) from Mus musculus (Mouse).